The chain runs to 526 residues: Secreted triacylglycerol lipase LIP4 (526 aa).

The signal sequence occupies residues 1-26 (MVRLSYVRFGVAWCIAIIIVSGFSNA). The N-linked (GlcNAc...) asparagine glycan is linked to N186. Residue S195 is the Nucleophile of the active site. N228 carries N-linked (GlcNAc...) asparagine glycosylation. Residues D342 and H376 contribute to the active site. N377 is a glycosylation site (N-linked (GlcNAc...) asparagine). Positions 412–526 (TGPSASSSAG…TMPAPPLMER (115 aa)) are disordered. Low complexity-rich tracts occupy residues 413 to 423 (GPSASSSAGGP) and 430 to 457 (TGGH…HAPA). N462 is a glycosylation site (N-linked (GlcNAc...) asparagine). Residues 480 to 490 (PSTGATSPAPS) show a composition bias toward low complexity. Positions 516-526 (RTMPAPPLMER) are enriched in pro residues.

It belongs to the AB hydrolase superfamily. Lipase family. Class Lip subfamily.

It is found in the secreted. The catalysed reaction is a triacylglycerol + H2O = a diacylglycerol + a fatty acid + H(+). It catalyses the reaction a monoacylglycerol + H2O = glycerol + a fatty acid + H(+). The enzyme catalyses a diacylglycerol + H2O = a monoacylglycerol + a fatty acid + H(+). Its function is as follows. Secreted lipase that hydrolyzes acylglycerol lipids such as triacylglycerols and consequently releases free fatty acid. Can hydrolyze 4-nitrophenyl palmitate to release 4-nitrophenol and palmitoic acid. Due to an absence of fatty acid synthase genes in Malassezia species, secretory lipases are essential for the yeast to generate free fatty acids from degradation of sebum and assimilate them as lipid sources for growth. Plays important roles not only in lipid metabolism but also in the immune response of host cells and pathogenesis. This chain is Secreted triacylglycerol lipase LIP4, found in Malassezia furfur (Pityriasis versicolor infection agent).